A 370-amino-acid polypeptide reads, in one-letter code: Actin-related protein 2/3 complex subunit 1A-B (370 aa).

WD repeat units lie at residues 6–45 (FLLE…WVKC), 50–89 (EHNG…WKPT), 140–179 (PIRS…VDEK), 202–241 (SSGG…SVSQ), 244–284 (TEFL…TFVS), and 322–365 (LHQN…SYIQ).

Belongs to the WD repeat ARPC1 family. As to quaternary structure, component of the Arp2/3 complex.

The protein resides in the cytoplasm. Its subcellular location is the cytoskeleton. The protein localises to the nucleus. In terms of biological role, probably functions as a component of the Arp2/3 complex which is involved in regulation of actin polymerization and together with an activating nucleation-promoting factor (NPF) mediates the formation of branched actin networks. In addition to its role in the cytoplasmic cytoskeleton, the Arp2/3 complex also promotes actin polymerization in the nucleus, thereby regulating gene transcription and repair of damaged DNA. This chain is Actin-related protein 2/3 complex subunit 1A-B (arpc1a-b), found in Xenopus laevis (African clawed frog).